A 371-amino-acid polypeptide reads, in one-letter code: Peptidyl-prolyl cis-trans isomerase D (371 aa).

The 162-residue stretch at 11 to 172 (FFDIQIGNEK…KDVTIVECGE (162 aa)) folds into the PPIase cyclophilin-type domain. A disordered region spans residues 175–195 (GQDYDDADKQTPDATGDPYED). TPR repeat units lie at residues 214–247 (ASEL…LHEF), 267–300 (FALH…ANAA), and 308–341 (AKAY…APGD).

The protein belongs to the cyclophilin-type PPIase family. PPIase D subfamily.

The protein resides in the cytoplasm. The enzyme catalyses [protein]-peptidylproline (omega=180) = [protein]-peptidylproline (omega=0). In terms of biological role, PPIases accelerate the folding of proteins. It catalyzes the cis-trans isomerization of proline imidic peptide bonds in oligopeptides. The chain is Peptidyl-prolyl cis-trans isomerase D (cpr6) from Aspergillus oryzae (strain ATCC 42149 / RIB 40) (Yellow koji mold).